A 498-amino-acid chain; its full sequence is L-amino acid oxidase Cdc18 (498 aa).

An N-terminal signal peptide occupies residues 1 to 2 (SC). A disulfide bridge links C12 with C173. FAD contacts are provided by residues 45–46 (MA), 65–66 (EA), R73, and 87–90 (GPMR). Residues R90 and H223 each contribute to the substrate site. V263 contributes to the FAD binding site. A disulfide bridge links C333 with C414. A glycan (N-linked (GlcNAc...) asparagine) is linked at N363. Residue Y374 participates in substrate binding. FAD is bound by residues E459 and 466-471 (GWIDST). 466–467 (GW) is a substrate binding site.

Belongs to the flavin monoamine oxidase family. FIG1 subfamily. Monomer. This is in contrast with most of its orthologs, that are non-covalently linked homodimers. FAD is required as a cofactor. As to expression, expressed by the venom gland.

The protein resides in the secreted. It carries out the reaction an L-alpha-amino acid + O2 + H2O = a 2-oxocarboxylate + H2O2 + NH4(+). The catalysed reaction is L-leucine + O2 + H2O = 4-methyl-2-oxopentanoate + H2O2 + NH4(+). Functionally, catalyzes an oxidative deamination of predominantly hydrophobic and aromatic L-amino acids, thus producing hydrogen peroxide that may contribute to the diverse toxic effects of this enzyme. Shows activity on L-Leu. Damages cell membranes of the Gram-positive bacteria S.aureus (MIC=8 ug/ml and MBC=16 ug/ml) and the Gram-negative bacteria A.baumannii (MIC=16 ug/ml and MBC=32 ug/ml). This antimicrobial activity is dependent on the production of hydrogen peroxyde, since it is inhibited by catalase, a hydrogen peroxyde scavenger. This Crotalus durissus cumanensis (South American rattlesnake) protein is L-amino acid oxidase Cdc18.